Consider the following 650-residue polypeptide: Putative lipase atg15 (650 aa).

Topologically, residues 1–11 (MKSSRKRTKRR) are cytoplasmic. The chain crosses the membrane as a helical; Signal-anchor for type II membrane protein span at residues 12–32 (VLQDMSISGLLLSVALLPSVV). The Lumenal segment spans residues 33–650 (SAQDHVYLDP…CVGSTGTELR (618 aa)). N-linked (GlcNAc...) asparagine glycosylation is found at asparagine 165, asparagine 200, asparagine 222, asparagine 280, and asparagine 304. The Charge relay system role is filled by serine 320. Asparagine 466 carries an N-linked (GlcNAc...) asparagine glycan.

The protein belongs to the AB hydrolase superfamily. Lipase family. In terms of assembly, binds to both phosphatidylinositol (PI) and phosphatidylinositol 3,5-bisphosphate (PIP2).

It localises to the endosome. Its subcellular location is the multivesicular body membrane. The protein resides in the prevacuolar compartment membrane. The catalysed reaction is a triacylglycerol + H2O = a diacylglycerol + a fatty acid + H(+). Functionally, lipase which is essential for lysis of subvacuolar cytoplasm to vacuole targeted bodies and intravacuolar autophagic bodies. Involved in the lysis of intravacuolar multivesicular body (MVB) vesicles. The intravacuolar membrane disintegration by atg15 is critical to life span extension. This Aspergillus fumigatus (strain ATCC MYA-4609 / CBS 101355 / FGSC A1100 / Af293) (Neosartorya fumigata) protein is Putative lipase atg15 (atg15).